The following is a 468-amino-acid chain: Aspartate ammonia-lyase (468 aa).

Positions 99, 138, 139, 140, and 185 each coordinate L-aspartate. The tract at residues 315 to 324 (GSSIMPGKVN) is SS loop. Ser316 serves as the catalytic Proton acceptor. Residues Ser317 and Lys322 each contribute to the L-aspartate site.

Belongs to the class-II fumarase/aspartase family. Aspartase subfamily. As to quaternary structure, homotetramer.

The catalysed reaction is L-aspartate = fumarate + NH4(+). In terms of biological role, catalyzes the reversible conversion of L-aspartate to fumarate and ammonia. This chain is Aspartate ammonia-lyase (aspA), found in Helicobacter pylori (strain ATCC 700392 / 26695) (Campylobacter pylori).